The sequence spans 3799 residues: Polyketide synthase GfsE (3799 aa).

Residues 33–459 (HEPIAIIGMS…GTNAHAILEE (427 aa)) enclose the Ketosynthase family 3 (KS3) 1 domain. 2 module regions span residues 33-1730 (HEPI…RSSA) and 1749-3494 (DEAI…RTDL). Catalysis depends on for beta-ketoacyl synthase 1 activity residues Cys206, His341, and His381. Positions 462–496 (AATGNPTEADTDQEPAASASPDRTTTLPAVPWPLS) are disordered. One can recognise a Malonyl-CoA:ACP transacylase (MAT) 1 domain in the interval 582 to 895 (FVFPGQGSQW…LGEAHAHGAD (314 aa)). Residues 944–1069 (HPLFGAVVEV…GVLELEARPE (126 aa)) are N-terminal hotdog fold 1. The 279-residue stretch at 944–1222 (HPLFGAVVEV…SRPVAEEQLG (279 aa)) folds into the PKS/mFAS DH 1 domain. Residue His976 is the Proton acceptor; for dehydratase activity 1 of the active site. The interval 1081 to 1222 (AEVVPVEGLY…SRPVAEEQLG (142 aa)) is C-terminal hotdog fold 1. Catalysis depends on Asp1142, which acts as the Proton donor; for dehydratase activity 1. The 173-residue stretch at 1382 to 1554 (LLVTGASGVL…TSLSWGLWAE (173 aa)) folds into the Ketoreductase (KR) 1 domain. The region spanning 1652–1730 (EAERAVLELV…ALATHIRSSA (79 aa)) is the Carrier 1 domain. At Ser1690 the chain carries O-(pantetheine 4'-phosphoryl)serine. In terms of domain architecture, Ketosynthase family 3 (KS3) 2 spans 1749–2174 (DEAIAIVGMA…GTNAHVILEQ (426 aa)). Active-site for beta-ketoacyl synthase 2 activity residues include Cys1921, His2056, and His2096. A Malonyl-CoA:ACP transacylase (MAT) 2 domain is found at 2284–2604 (FVFPGQGSQW…VSLAKVHTHG (321 aa)). Residues 2656–2781 (HPLLTGVVDL…GTLAVDADHD (126 aa)) form an N-terminal hotdog fold 2 region. Positions 2656-2936 (HPLLTGVVDL…TRPVTAAQFA (281 aa)) constitute a PKS/mFAS DH 2 domain. The active-site Proton acceptor; for dehydratase activity 2 is the His2688. Residues 2794–2936 (ADPVDLTEVY…TRPVTAAQFA (143 aa)) form a C-terminal hotdog fold 2 region. Residue Asp2855 is the Proton donor; for dehydratase activity 2 of the active site. The Ketoreductase (KR) 2 domain occupies 3142 to 3314 (LLVTGASGVL…TALSWGLWAE (173 aa)). One can recognise a Carrier 2 domain in the interval 3419-3494 (AALLDLVGAQ…ALAAQLRTDL (76 aa)). Ser3454 carries the post-translational modification O-(pantetheine 4'-phosphoryl)serine.

Pantetheine 4'-phosphate is required as a cofactor.

It functions in the pathway antibiotic biosynthesis. Functionally, fifth protein in the synthesis of the 16-membered macrolide antibiotics FD-891 and FD-892. Composed of 2 modules. Modifies the product of GfsD by multiple rounds of addition of methylmalonyl-CoA and other modifications to help generate the final products. The chain is Polyketide synthase GfsE from Streptomyces halstedii.